Reading from the N-terminus, the 750-residue chain is Photosystem I P700 chlorophyll a apoprotein A1 (750 aa).

8 helical membrane passes run Val70–Ala93, Leu156–His179, Leu195–Leu219, Ile291–Tyr309, Trp346–Tyr369, Leu385–Val411, Ala433–His455, and Phe531–Leu549. Residues Cys573 and Cys582 each coordinate [4Fe-4S] cluster. 2 helical membrane passes run His589–Trp610 and Leu664–Phe686. His675 lines the chlorophyll a' pocket. 2 residues coordinate chlorophyll a: Met683 and Tyr691. Position 692 (Trp692) interacts with phylloquinone. A helical transmembrane segment spans residues Ala724–Ala744.

Belongs to the PsaA/PsaB family. The PsaA/B heterodimer binds the P700 chlorophyll special pair and subsequent electron acceptors. PSI consists of a core antenna complex that captures photons, and an electron transfer chain that converts photonic excitation into a charge separation. The eukaryotic PSI reaction center is composed of at least 11 subunits. P700 is a chlorophyll a/chlorophyll a' dimer, A0 is one or more chlorophyll a, A1 is one or both phylloquinones and FX is a shared 4Fe-4S iron-sulfur center. serves as cofactor.

The protein resides in the plastid. It localises to the chloroplast thylakoid membrane. It carries out the reaction reduced [plastocyanin] + hnu + oxidized [2Fe-2S]-[ferredoxin] = oxidized [plastocyanin] + reduced [2Fe-2S]-[ferredoxin]. Its function is as follows. PsaA and PsaB bind P700, the primary electron donor of photosystem I (PSI), as well as the electron acceptors A0, A1 and FX. PSI is a plastocyanin-ferredoxin oxidoreductase, converting photonic excitation into a charge separation, which transfers an electron from the donor P700 chlorophyll pair to the spectroscopically characterized acceptors A0, A1, FX, FA and FB in turn. Oxidized P700 is reduced on the lumenal side of the thylakoid membrane by plastocyanin. The chain is Photosystem I P700 chlorophyll a apoprotein A1 from Cucumis sativus (Cucumber).